Here is an 802-residue protein sequence, read N- to C-terminus: Mitogen-activated protein kinase kinase kinase 20 (802 aa).

S2 bears the N-acetylserine mark. Phosphoserine is present on residues S2, S3, and S7. In terms of domain architecture, Protein kinase spans 16–277 (LQFFENCGGG…NLPDQCNSFL (262 aa)). ATP contacts are provided by residues 22–30 (CGGGSFGSV) and K45. D133 serves as the catalytic Proton acceptor. Phosphothreonine; by autocatalysis is present on T161. S165 is subject to Phosphoserine; by autocatalysis. S275 and S302 each carry phosphoserine. A leucine-zipper region spans residues 287–308 (IEATLERLKKLERDLSFKEQEL). The SAM domain maps to 339–410 (WTEDDVYFWV…KSAIEKLTHD (72 aa)). 3 positions are modified to phosphoserine: K434, Q453, and S567. T586 bears the Phosphothreonine mark. A phosphoserine mark is found at S587, S593, and S599. The segment covering 624–642 (YQQITPSINPSRSSSPTQY) has biased composition (polar residues). The tract at residues 624 to 802 (YQQITPSINP…RGNYRGRRNF (179 aa)) is disordered. Residue T628 is modified to Phosphothreonine. Phosphoserine occurs at positions 634, 638, 649, 650, and 661. Over residues 643–666 (GLSRNFSSLNLSSRDSGFSSLNDS) the composition is skewed to low complexity. A compositionally biased stretch (basic and acidic residues) spans 667–678 (SSERGRYSDRSR). A sensing domain (S) region spans residues 670–713 (RGRYSDRSRNKYYRGSVSLNSSPKGRYGGKSQHSTPSRERYSGK). Phosphoserine is present on residues S685, S720, S727, and S733. Basic and acidic residues predominate over residues 728 to 741 (PDFKRSPNDHDRRV). Phosphothreonine is present on T744. Residues 776-802 (RKKTHRQLSAKTSKERTRGNYRGRRNF) are C-terminal domain (CTD).

The protein belongs to the protein kinase superfamily. STE Ser/Thr protein kinase family. MAP kinase kinase kinase subfamily. As to quaternary structure, homodimer. Interacts with ZNF33A. Component of a signaling complex containing at least AKAP13, PKN1, MAPK14, MAP3K20 and MAP2K3. Within this complex, AKAP13 interacts directly with PKN1, which in turn recruits MAPK14, MAP2K3 and MAP3K20. Interacts with EIF2AK4/GCN2; promoting EIF2AK4/GCN2 kinase activity. In terms of assembly, interacts with isoform ZAKbeta. Interacts with isoform ZAKalpha. Requires Mg(2+) as cofactor. Activated by phosphorylation by PKN1, followed by autophosphorylation on Thr-161 and Ser-165. Autophosphorylation in response to ribotoxic stress promotes dissociation from colliding ribosomes and activation.

Its subcellular location is the cytoplasm. The protein localises to the nucleus. It carries out the reaction L-seryl-[protein] + ATP = O-phospho-L-seryl-[protein] + ADP + H(+). The catalysed reaction is L-threonyl-[protein] + ATP = O-phospho-L-threonyl-[protein] + ADP + H(+). With respect to regulation, activated in response to stress, such as ribosomal stress, osmotic shock and ionizing radiation. Activated by phosphorylation by PKN1, followed by autophosphorylation on Thr-161 and Ser-165. Its function is as follows. Stress-activated component of a protein kinase signal transduction cascade that promotes programmed cell death in response to various stress, such as ribosomal stress, osmotic shock and ionizing radiation. Acts by catalyzing phosphorylation of MAP kinase kinases, leading to activation of the JNK (MAPK8/JNK1, MAPK9/JNK2 and/or MAPK10/JNK3) and MAP kinase p38 (MAPK11, MAPK12, MAPK13 and/or MAPK14) pathways. Activates JNK through phosphorylation of MAP2K4/MKK4 and MAP2K7/MKK7, and MAP kinase p38 gamma (MAPK12) via phosphorylation of MAP2K3/MKK3 and MAP2K6/MKK6. Involved in stress associated with adrenergic stimulation: contributes to cardiac decompensation during periods of acute cardiac stress. May be involved in regulation of S and G2 cell cycle checkpoint by mediating phosphorylation of CHEK2. Key component of the stress-activated protein kinase signaling cascade in response to ribotoxic stress or UV-B irradiation. Acts as the proximal sensor of ribosome collisions during the ribotoxic stress response (RSR). Directly binds to the ribosome by inserting its flexible C-terminus into the ribosomal intersubunit space, thereby acting as a sentinel for colliding ribosomes. Upon ribosome collisions, activates either the stress-activated protein kinase signal transduction cascade or the integrated stress response (ISR), leading to programmed cell death or cell survival, respectively. Dangerous levels of ribosome collisions trigger the autophosphorylation and activation of MAP3K20, which dissociates from colliding ribosomes and phosphorylates MAP kinase kinases, leading to activation of the JNK and MAP kinase p38 pathways that promote programmed cell death. Less dangerous levels of ribosome collisions trigger the integrated stress response (ISR): MAP3K20 activates EIF2AK4/GCN2 independently of its protein-kinase activity, promoting EIF2AK4/GCN2-mediated phosphorylation of EIF2S1/eIF-2-alpha. Also acts as a histone kinase by phosphorylating histone H3 at 'Ser-28' (H3S28ph). In terms of biological role, isoform that lacks the C-terminal region that mediates ribosome-binding: does not act as a sensor of ribosome collisions in response to ribotoxic stress. May act as an antagonist of isoform ZAKalpha: interacts with isoform ZAKalpha, leading to decrease the expression of isoform ZAKalpha. This Mus musculus (Mouse) protein is Mitogen-activated protein kinase kinase kinase 20.